The chain runs to 118 residues: Small ribosomal subunit protein uS13 (118 aa).

Residues 96–118 (PLRGQRTRTNARTRKGPRKAIKK) form a disordered region.

This sequence belongs to the universal ribosomal protein uS13 family. Part of the 30S ribosomal subunit. Forms a loose heterodimer with protein S19. Forms two bridges to the 50S subunit in the 70S ribosome.

Located at the top of the head of the 30S subunit, it contacts several helices of the 16S rRNA. In the 70S ribosome it contacts the 23S rRNA (bridge B1a) and protein L5 of the 50S subunit (bridge B1b), connecting the 2 subunits; these bridges are implicated in subunit movement. Contacts the tRNAs in the A and P-sites. This Stenotrophomonas maltophilia (strain K279a) protein is Small ribosomal subunit protein uS13.